Here is a 227-residue protein sequence, read N- to C-terminus: ATP-dependent dethiobiotin synthetase BioD (227 aa).

13–18 (DVGKTV) contributes to the ATP binding site. Thr-17 contacts Mg(2+). The active site involves Lys-38. Residues Asp-55, 116–119 (EGAG), 176–177 (NR), and 205–207 (PYI) contribute to the ATP site. Residues Asp-55 and Glu-116 each coordinate Mg(2+).

Belongs to the dethiobiotin synthetase family. As to quaternary structure, homodimer. Mg(2+) serves as cofactor.

The protein resides in the cytoplasm. It catalyses the reaction (7R,8S)-7,8-diammoniononanoate + CO2 + ATP = (4R,5S)-dethiobiotin + ADP + phosphate + 3 H(+). Its pathway is cofactor biosynthesis; biotin biosynthesis; biotin from 7,8-diaminononanoate: step 1/2. Its function is as follows. Catalyzes a mechanistically unusual reaction, the ATP-dependent insertion of CO2 between the N7 and N8 nitrogen atoms of 7,8-diaminopelargonic acid (DAPA, also called 7,8-diammoniononanoate) to form a ureido ring. This is ATP-dependent dethiobiotin synthetase BioD from Vibrio vulnificus (strain CMCP6).